The chain runs to 830 residues: G-type lectin S-receptor-like serine/threonine-protein kinase SD1-13 (830 aa).

Positions 1-21 (MGCLLILLLTLICFSLRLCLA) are cleaved as a signal peptide. A Bulb-type lectin domain is found at 22 to 145 (TDVITFSSEF…TNTGDEILWE (124 aa)). Residues 22 to 434 (TDVITFSSEF…SEFKKRTNRS (413 aa)) lie on the Extracellular side of the membrane. N-linked (GlcNAc...) asparagine glycans are attached at residues N40, N53, and N82. Residues 283–321 (PSTKCDTYATCGQFASCRFNPGSTPPCMCIRGFKPQSYA) enclose the EGF-like; atypical domain. Disulfide bonds link C287-C299 and C293-C309. Residues N327, N384, and N432 are each glycosylated (N-linked (GlcNAc...) asparagine). In terms of domain architecture, PAN spans 340 to 423 (CESRDNNDGS…TGVVFYIRLA (84 aa)). Disulfide bonds link C377/C398 and C381/C387. The chain crosses the membrane as a helical span at residues 435 to 455 (IVITVTLLVGAFLFAGTVVLA). At 456 to 830 (LWKIAKHREK…NVSLTKITGR (375 aa)) the chain is on the cytoplasmic side. Positions 512 to 798 (FSITNKLGQG…NLPEPKQPAF (287 aa)) constitute a Protein kinase domain. ATP is bound by residues 518 to 526 (LGQGGFGAV) and K540. At T545 the chain carries Phosphothreonine. A phosphoserine mark is found at S546 and S561. Residues 601–618 (VKQRLLDWKTRFNIIDGI) form a caM-binding region. Residue D637 is the Proton acceptor of the active site. Phosphoserine is present on residues S641, S654, and S670. T671 is modified (phosphothreonine). Residues S714, S715, S726, S805, S809, S810, S813, S818, and S823 each carry the phosphoserine modification. The interval 789-830 (NLPEPKQPAFIPRRGTSEVESSGQSDPRASINNVSLTKITGR) is disordered. Over residues 806 to 830 (EVESSGQSDPRASINNVSLTKITGR) the composition is skewed to polar residues. A phosphothreonine mark is found at T825 and T828.

The protein belongs to the protein kinase superfamily. Ser/Thr protein kinase family. In terms of assembly, interacts with PUB9, PUB13 and PUB14. Binds to calmodulin (CaM) in a Ca(2+)-dependent manner. Post-translationally, autophosphorylated. In terms of tissue distribution, mostly expressed in rosette leaves, and, to a lower extent, in cauline leaves and stems.

The protein resides in the cell membrane. It catalyses the reaction L-seryl-[protein] + ATP = O-phospho-L-seryl-[protein] + ADP + H(+). The catalysed reaction is L-threonyl-[protein] + ATP = O-phospho-L-threonyl-[protein] + ADP + H(+). Functionally, receptor-like serine/threonine-protein kinase that represses the disease resistance signaling pathway triggered in response to bacterial pathogen such as Pseudomonas syringae pv. tomato. The protein is G-type lectin S-receptor-like serine/threonine-protein kinase SD1-13 (SD113) of Arabidopsis thaliana (Mouse-ear cress).